The primary structure comprises 500 residues: Transcription termination factor MTERF8, chloroplastic (500 aa).

The N-terminal 64 residues, 1–64, are a transit peptide targeting the chloroplast; sequence MVILSLVSCS…NHREPALTFR (64 aa).

This sequence belongs to the mTERF family.

It is found in the plastid. It localises to the chloroplast. Transcription termination factor that is transcriptionally active in chloroplasts. This is Transcription termination factor MTERF8, chloroplastic from Arabidopsis thaliana (Mouse-ear cress).